Reading from the N-terminus, the 515-residue chain is ATP synthase subunit alpha (515 aa).

G171–T178 contacts ATP.

It belongs to the ATPase alpha/beta chains family. As to quaternary structure, F-type ATPases have 2 components, CF(1) - the catalytic core - and CF(0) - the membrane proton channel. CF(1) has five subunits: alpha(3), beta(3), gamma(1), delta(1), epsilon(1). CF(0) has three main subunits: a(1), b(2) and c(9-12). The alpha and beta chains form an alternating ring which encloses part of the gamma chain. CF(1) is attached to CF(0) by a central stalk formed by the gamma and epsilon chains, while a peripheral stalk is formed by the delta and b chains.

It is found in the cell inner membrane. The catalysed reaction is ATP + H2O + 4 H(+)(in) = ADP + phosphate + 5 H(+)(out). Produces ATP from ADP in the presence of a proton gradient across the membrane. The alpha chain is a regulatory subunit. This Xanthomonas axonopodis pv. citri (strain 306) protein is ATP synthase subunit alpha.